A 516-amino-acid polypeptide reads, in one-letter code: Gamma-aminobutyrate transaminase 1, mitochondrial (516 aa).

The N-terminal 47 residues, 1 to 47 (MVIARGLLRSNASSSSSQAINLLKYVTSTGSLQGHTQNLCDASTRHF), are a transit peptide targeting the mitochondrion. 171–172 (GS) serves as a coordination point for pyridoxal 5'-phosphate. Tyr-204 is a binding site for substrate. Residue Asp-311 coordinates pyridoxal 5'-phosphate. Residue Lys-340 participates in substrate binding. An N6-(pyridoxal phosphate)lysine modification is found at Lys-340.

It belongs to the class-III pyridoxal-phosphate-dependent aminotransferase family. Expressed in roots, stems and panicles.

It localises to the mitochondrion. It carries out the reaction 4-aminobutanoate + pyruvate = succinate semialdehyde + L-alanine. The enzyme catalyses 4-aminobutanoate + glyoxylate = succinate semialdehyde + glycine. In terms of biological role, transaminase that degrades gamma-amino butyric acid (GABA) and uses pyruvate as amino-group acceptor, but not 2-oxoglutarate. Not involved in the interaction with blast fungus. The chain is Gamma-aminobutyrate transaminase 1, mitochondrial (OSL2) from Oryza sativa subsp. japonica (Rice).